The primary structure comprises 124 residues: Ragulator complex protein LAMTOR3 (124 aa).

The required for interaction with LAMTOR2 stretch occupies residues 57 to 70 (TDQGSKLGLSKNKS).

This sequence belongs to the LAMTOR3 family. In terms of assembly, part of the Ragulator complex composed of LAMTOR1, LAMTOR2, LAMTOR3, LAMTOR4 and LAMTOR5. LAMTOR4 and LAMTOR5 form a heterodimer that interacts, through LAMTOR1, with a LAMTOR2, LAMTOR3 heterodimer. Interacts with LAMTOR1 and LAMTOR2; the interaction is direct. The Ragulator complex interacts with both the mTORC1 complex and heterodimers constituted of the Rag GTPases RagA/RRAGA, RagB/RRAGB, RagC/RRAGC and RagD/RRAGD; regulated by amino acid availability. The Ragulator complex interacts with SLC38A9; the probable amino acid sensor. Component of the lysosomal folliculin complex (LFC), composed of FLCN, FNIP1 (or FNIP2), RagA/RRAGA or RagB/RRAGB GDP-bound, RagC/RRAGC or RagD/RRAGD GTP-bound, and Ragulator. Interacts with MAP2K1/MEK1 and MAPK2. Interacts with MORG1.

The protein resides in the late endosome membrane. Functionally, as part of the Ragulator complex it is involved in amino acid sensing and activation of mTORC1, a signaling complex promoting cell growth in response to growth factors, energy levels, and amino acids. Activated by amino acids through a mechanism involving the lysosomal V-ATPase, the Ragulator plays a dual role for the small GTPases Rag (RagA/RRAGA, RagB/RRAGB, RagC/RRAGC and/or RagD/RRAGD): it (1) acts as a guanine nucleotide exchange factor (GEF), activating the small GTPases Rag and (2) mediates recruitment of Rag GTPases to the lysosome membrane. Activated Ragulator and Rag GTPases function as a scaffold recruiting mTORC1 to lysosomes where it is in turn activated. Adapter protein that enhances the efficiency of the MAP kinase cascade facilitating the activation of MAPK2. This is Ragulator complex protein LAMTOR3 from Homo sapiens (Human).